The chain runs to 158 residues: Small ribosomal subunit protein uS7 (158 aa).

Belongs to the universal ribosomal protein uS7 family. In terms of assembly, part of the 30S ribosomal subunit. Contacts proteins S9 and S11.

One of the primary rRNA binding proteins, it binds directly to 16S rRNA where it nucleates assembly of the head domain of the 30S subunit. Is located at the subunit interface close to the decoding center, probably blocks exit of the E-site tRNA. In Flavobacterium psychrophilum (strain ATCC 49511 / DSM 21280 / CIP 103535 / JIP02/86), this protein is Small ribosomal subunit protein uS7.